Here is a 384-residue protein sequence, read N- to C-terminus: Chaperone protein DnaJ (384 aa).

The J domain occupies 5–70 (DFYEVLGVSK…DKKAAYDRYG (66 aa)). The CR-type zinc finger occupies 143–221 (GAQKTITVPG…CHGSGRIEKE (79 aa)). C156, C159, C173, C176, C195, C198, C209, and C212 together coordinate Zn(2+). CXXCXGXG motif repeat units lie at residues 156 to 163 (CGSCNGTG), 173 to 180 (CPTCSGLG), 195 to 202 (CPTCGGQG), and 209 to 216 (CRVCHGSG).

The protein belongs to the DnaJ family. As to quaternary structure, homodimer. Requires Zn(2+) as cofactor.

The protein localises to the cytoplasm. Participates actively in the response to hyperosmotic and heat shock by preventing the aggregation of stress-denatured proteins and by disaggregating proteins, also in an autonomous, DnaK-independent fashion. Unfolded proteins bind initially to DnaJ; upon interaction with the DnaJ-bound protein, DnaK hydrolyzes its bound ATP, resulting in the formation of a stable complex. GrpE releases ADP from DnaK; ATP binding to DnaK triggers the release of the substrate protein, thus completing the reaction cycle. Several rounds of ATP-dependent interactions between DnaJ, DnaK and GrpE are required for fully efficient folding. Also involved, together with DnaK and GrpE, in the DNA replication of plasmids through activation of initiation proteins. The chain is Chaperone protein DnaJ from Rhodobacter capsulatus (Rhodopseudomonas capsulata).